The sequence spans 467 residues: UDP-N-acetylmuramate--L-alanine ligase (467 aa).

An ATP-binding site is contributed by 114–120 (GTHGKTT).

The protein belongs to the MurCDEF family.

It is found in the cytoplasm. It catalyses the reaction UDP-N-acetyl-alpha-D-muramate + L-alanine + ATP = UDP-N-acetyl-alpha-D-muramoyl-L-alanine + ADP + phosphate + H(+). Its pathway is cell wall biogenesis; peptidoglycan biosynthesis. Cell wall formation. The sequence is that of UDP-N-acetylmuramate--L-alanine ligase from Rhodopseudomonas palustris (strain TIE-1).